Consider the following 213-residue polypeptide: Ras-related protein Rab-25 (213 aa).

The GTP site is built by serine 21, glycine 24, lysine 25, threonine 26, asparagine 27, serine 38, histidine 39, threonine 43, and threonine 44. Threonine 26 provides a ligand contact to Mg(2+). 2 consecutive short sequence motifs (switch) follow at residues 35–49 and 67–84; these read NEFS…GVEF and DTAG…YYRG. Mg(2+)-binding residues include threonine 44 and aspartate 67. Residues glycine 70, asparagine 125, lysine 126, aspartate 128, alanine 156, and leucine 157 each coordinate GTP. Residues cysteine 209 and cysteine 210 are each lipidated (S-geranylgeranyl cysteine). Cysteine 210 is modified (cysteine methyl ester). The propeptide at 211 to 213 is removed in mature form; the sequence is ISL.

The protein belongs to the small GTPase superfamily. Rab family. As to quaternary structure, interacts (GTP-bound form) with RAB11FIP1, RAB11FIP2, RAB11FIP3 and RAB11FIP4. Interacts (via the hypervariable C-terminal region) with ITGB1 (via the cytoplasmic region); the interaction is GTP-dependent. Interacts with ITGAV. Associates with the integrin alpha-V/beta-1 heterodimer. Interacts with VPS33B. Mg(2+) is required as a cofactor.

It is found in the cell membrane. Its subcellular location is the cell projection. The protein localises to the pseudopodium membrane. It localises to the cytoplasmic vesicle. It carries out the reaction GTP + H2O = GDP + phosphate + H(+). Its activity is regulated as follows. Regulated by guanine nucleotide exchange factors (GEFs) which promote the exchange of bound GDP for free GTP. Regulated by GTPase activating proteins (GAPs) which increase the GTP hydrolysis activity. Inhibited by GDP dissociation inhibitors (GDIs) which prevent Rab-GDP dissociation. In terms of biological role, the small GTPases Rab are key regulators of intracellular membrane trafficking, from the formation of transport vesicles to their fusion with membranes. Rabs cycle between an inactive GDP-bound form and an active GTP-bound form that is able to recruit to membranes different set of downstream effectors directly responsible for vesicle formation, movement, tethering and fusion. RAB25 regulates epithelial cell differentiation, proliferation and survival, thereby playing key roles in tumorigenesis. Promotes invasive migration of cells in which it functions to localize and maintain integrin alpha-V/beta-1 at the tips of extending pseudopodia. Involved in the regulation of epithelial morphogenesis through the control of CLDN4 expression and localization at tight junctions. May selectively regulate the apical recycling pathway. Together with MYO5B regulates transcytosis. The sequence is that of Ras-related protein Rab-25 from Mus musculus (Mouse).